We begin with the raw amino-acid sequence, 129 residues long: MSNVPHELLYTKEHEWVRIDGNSAVVGITEHAQRELGDVVFVELPDVGKSFEVGEPFGTVESVKAVSEIYAPLSGEITEINNEVVDSPELVNEDPYGEGWLAKFSFTTAPSGLLSAAEYERYINDEANK.

Positions Ser23–Ser105 constitute a Lipoyl-binding domain. The residue at position 64 (Lys64) is an N6-lipoyllysine.

This sequence belongs to the GcvH family. The glycine cleavage system is composed of four proteins: P, T, L and H. It depends on (R)-lipoate as a cofactor.

Its function is as follows. The glycine cleavage system catalyzes the degradation of glycine. The H protein shuttles the methylamine group of glycine from the P protein to the T protein. This is Glycine cleavage system H protein from Herpetosiphon aurantiacus (strain ATCC 23779 / DSM 785 / 114-95).